A 244-amino-acid chain; its full sequence is NH(3)-dependent NAD(+) synthetase (244 aa).

29–36 (GISGGIDS) lines the ATP pocket. Residue D35 coordinates Mg(2+). A deamido-NAD(+)-binding site is contributed by R113. T133 serves as a coordination point for ATP. Position 138 (E138) interacts with Mg(2+). Residues K146 and D153 each coordinate deamido-NAD(+). The ATP site is built by K162 and T184. Deamido-NAD(+) is bound at residue 230–231 (HK).

The protein belongs to the NAD synthetase family. Homodimer.

The enzyme catalyses deamido-NAD(+) + NH4(+) + ATP = AMP + diphosphate + NAD(+) + H(+). It functions in the pathway cofactor biosynthesis; NAD(+) biosynthesis; NAD(+) from deamido-NAD(+) (ammonia route): step 1/1. In terms of biological role, catalyzes the ATP-dependent amidation of deamido-NAD to form NAD. Uses ammonia as a nitrogen source. This chain is NH(3)-dependent NAD(+) synthetase, found in Mesoplasma florum (strain ATCC 33453 / NBRC 100688 / NCTC 11704 / L1) (Acholeplasma florum).